A 255-amino-acid polypeptide reads, in one-letter code: Small ribosomal subunit protein eS1 (255 aa).

Over residues 1-18 (MAVGKNKRLSKGKKGLKK) the composition is skewed to basic residues. The disordered stretch occupies residues 1 to 28 (MAVGKNKRLSKGKKGLKKRTQDPFSRKD). N-acetylalanine; partial is present on A2. The span at 19 to 28 (RTQDPFSRKD) shows a compositional bias: basic and acidic residues.

This sequence belongs to the eukaryotic ribosomal protein eS1 family. In terms of assembly, component of the small ribosomal subunit. Mature ribosomes consist of a small (40S) and a large (60S) subunit. The 40S subunit contains about 33 different proteins and 1 molecule of RNA (18S). The 60S subunit contains about 49 different proteins and 3 molecules of RNA (25S, 5.8S and 5S).

Its subcellular location is the cytoplasm. The protein is Small ribosomal subunit protein eS1 of Ajellomyces capsulatus (strain H143) (Darling's disease fungus).